The sequence spans 212 residues: MNIMLLGAPGSGKGTLAEKLIKNQGFNQMSTGDLMRKEINDETPLGIECARYMNEGRLVPDEVTMGIVKNFLQDNHNQLIFDGIPRTLNQAKILEENLIELNAKIDKVIYIDVPSEILLNRISGRLICPKCKVSYHIISRKPKLEGICDNDGTELVRRPDDAPEKVKVRLEAYANETAPLVDYYKNKPGFIHIVDNANTTAEEVYAEVLGAL.

Position 10–15 (10–15 (GSGKGT)) interacts with ATP. An NMP region spans residues 30 to 59 (STGDLMRKEINDETPLGIECARYMNEGRLV). Residues Thr-31, Arg-36, 57–59 (RLV), and Gln-90 contribute to the AMP site. An LID region spans residues 124–161 (GRLICPKCKVSYHIISRKPKLEGICDNDGTELVRRPDD). Arg-125 is a binding site for ATP. Zn(2+) is bound by residues Cys-128 and Cys-131. 134 to 135 (SY) contacts ATP. Cys-148 and Asp-151 together coordinate Zn(2+). Positions 158 and 169 each coordinate AMP. Asn-198 lines the ATP pocket.

Belongs to the adenylate kinase family. Monomer.

The protein localises to the cytoplasm. It carries out the reaction AMP + ATP = 2 ADP. Its pathway is purine metabolism; AMP biosynthesis via salvage pathway; AMP from ADP: step 1/1. In terms of biological role, catalyzes the reversible transfer of the terminal phosphate group between ATP and AMP. Plays an important role in cellular energy homeostasis and in adenine nucleotide metabolism. The chain is Adenylate kinase from Mesoplasma florum (strain ATCC 33453 / NBRC 100688 / NCTC 11704 / L1) (Acholeplasma florum).